The sequence spans 147 residues: Insertion element IS402 uncharacterized 16.2 kDa protein (147 aa).

The interval 106–147 is disordered; sequence DSSSIRAVGAGQKLGQTPPIARDPVPSTTSSPTPTVRRSPRS. Low complexity predominate over residues 129-147; the sequence is PVPSTTSSPTPTVRRSPRS.

It belongs to the transposase 6 family.

This is Insertion element IS402 uncharacterized 16.2 kDa protein from Burkholderia cepacia (Pseudomonas cepacia).